The sequence spans 170 residues: Acetyl-CoA decarbonylase/synthase complex subunit epsilon 1 (170 aa).

This sequence belongs to the CdhB family. As to quaternary structure, heterotetramer of two alpha and two epsilon subunits. The ACDS complex is made up of alpha, epsilon, beta, gamma and delta subunits with a probable stoichiometry of (alpha(2)epsilon(2))(4)-beta(8)-(gamma(1)delta(1))(8).

It participates in one-carbon metabolism; methanogenesis from acetate. Part of a complex that catalyzes the reversible cleavage of acetyl-CoA, allowing growth on acetate as sole source of carbon and energy. The alpha-epsilon subcomponent functions as a carbon monoxide dehydrogenase. The precise role of the epsilon subunit is unclear; it may have a stabilizing role within the alpha(2)epsilon(2) component and/or be involved in electron transfer to FAD during a potential FAD-mediated CO oxidation. In Methanosarcina mazei (strain ATCC BAA-159 / DSM 3647 / Goe1 / Go1 / JCM 11833 / OCM 88) (Methanosarcina frisia), this protein is Acetyl-CoA decarbonylase/synthase complex subunit epsilon 1 (cdhB1).